We begin with the raw amino-acid sequence, 156 residues long: Histone acetyltransferase HPA2 (156 aa).

An N-acetyltransferase domain is found at 9–156; sequence ITVRFVTEND…PKILYKRKGY (148 aa). 93–106 is a binding site for acetyl-CoA; the sequence is LYVDENSRVKGAGG.

The protein belongs to the acetyltransferase family. GNAT subfamily. As to quaternary structure, forms homodimers in the absence, and homotetramers in the presence of acetyl-CoA. In terms of processing, autoacetylates in an intermolecular reaction.

It carries out the reaction L-lysyl-[protein] + acetyl-CoA = N(6)-acetyl-L-lysyl-[protein] + CoA + H(+). N-acetyltransferase that acetylates histone H3 at 'Lys-14' and histone H4 at 'Lys-5' and 'Lys-12'. Also acetylates polyamines like putrescine, spermidine and spermine, and certain other small basic proteins like nuclear HMG proteins. The polypeptide is Histone acetyltransferase HPA2 (Saccharomyces cerevisiae (strain ATCC 204508 / S288c) (Baker's yeast)).